A 341-amino-acid chain; its full sequence is Major capsid protein (341 aa).

Residues 109-129 (RRIILQNMKDEELAIAQVEEK) adopt a coiled-coil conformation.

This sequence belongs to the lambda phage major capsid protein family. In terms of assembly, homomultimer.

The protein resides in the virion. It is found in the host cytoplasm. Its function is as follows. Assembles to form an icosahedral capsid with a T=7 symmetry. The icosahedral capsid is about 60 nm in diameter and composed of 415 major capsid proteins. The assembly is primed by the interaction between capsid assembly protease and portal dodecamer, and major capsid proteins assemble cooperatively to form the procapsid with the help of capsid scaffolding protein. Major capsid protein forms hexons and pentons of the icosahedron. Viral genomic DNA is packaged into the procapsid through the portal vertex. The packaging triggers a dramatic reconfiguration of the capsid shell. The protein is Major capsid protein (E) of Enterobacteria phage phi80 (Bacteriophage phi-80).